A 99-amino-acid chain; its full sequence is Probable small ribosomal subunit protein cS23 (99 aa).

This sequence belongs to the chloroplast-specific ribosomal protein cS23 family. Part of the 30S ribosomal subunit.

In terms of biological role, probably a ribosomal protein or a ribosome-associated protein. The polypeptide is Probable small ribosomal subunit protein cS23 (Synechococcus sp. (strain JA-2-3B'a(2-13)) (Cyanobacteria bacterium Yellowstone B-Prime)).